The following is a 92-amino-acid chain: Small ribosomal subunit protein uS19c (92 aa).

The protein belongs to the universal ribosomal protein uS19 family.

It localises to the plastid. The protein resides in the chloroplast. In terms of biological role, protein S19 forms a complex with S13 that binds strongly to the 16S ribosomal RNA. The polypeptide is Small ribosomal subunit protein uS19c (Nicotiana tomentosiformis (Tobacco)).